A 180-amino-acid polypeptide reads, in one-letter code: 3-phenylpropionate/cinnamic acid dioxygenase subunit beta (180 aa).

It belongs to the bacterial ring-hydroxylating dioxygenase beta subunit family. As to quaternary structure, this dioxygenase system consists of four proteins: the two subunits of the hydroxylase component (HcaE and HcaF), a ferredoxin (HcaC) and a ferredoxin reductase (HcaD).

It catalyses the reaction 3-phenylpropanoate + NADH + O2 + H(+) = 3-(cis-5,6-dihydroxycyclohexa-1,3-dien-1-yl)propanoate + NAD(+). The catalysed reaction is (E)-cinnamate + NADH + O2 + H(+) = (2E)-3-(cis-5,6-dihydroxycyclohexa-1,3-dien-1-yl)prop-2-enoate + NAD(+). The protein operates within aromatic compound metabolism; 3-phenylpropanoate degradation. Its function is as follows. Part of the multicomponent 3-phenylpropionate dioxygenase. Converts 3-phenylpropionic acid (PP) and cinnamic acid (CI) into 3-phenylpropionate-dihydrodiol (PP-dihydrodiol) and cinnamic acid-dihydrodiol (CI-dihydrodiol), respectively. The sequence is that of 3-phenylpropionate/cinnamic acid dioxygenase subunit beta from Photorhabdus laumondii subsp. laumondii (strain DSM 15139 / CIP 105565 / TT01) (Photorhabdus luminescens subsp. laumondii).